Consider the following 428-residue polypeptide: Adenylosuccinate synthetase (428 aa).

GTP contacts are provided by residues 12 to 18 (GDEGKGK) and 40 to 42 (GHT). Asp-13 (proton acceptor) is an active-site residue. Mg(2+)-binding residues include Asp-13 and Gly-40. IMP is bound by residues 13–16 (DEGK), 38–41 (NAGH), Thr-133, Arg-147, Asn-224, Thr-239, and Arg-303. The active-site Proton donor is His-41. 299–305 (TTTGRRR) lines the substrate pocket. Residues Arg-305, 331–333 (KLD), and 413–415 (GVG) contribute to the GTP site.

It belongs to the adenylosuccinate synthetase family. As to quaternary structure, homodimer. The cofactor is Mg(2+).

It localises to the cytoplasm. The enzyme catalyses IMP + L-aspartate + GTP = N(6)-(1,2-dicarboxyethyl)-AMP + GDP + phosphate + 2 H(+). It functions in the pathway purine metabolism; AMP biosynthesis via de novo pathway; AMP from IMP: step 1/2. Functionally, plays an important role in the de novo pathway and in the salvage pathway of purine nucleotide biosynthesis. Catalyzes the first committed step in the biosynthesis of AMP from IMP. The polypeptide is Adenylosuccinate synthetase (Coprinopsis cinerea (strain Okayama-7 / 130 / ATCC MYA-4618 / FGSC 9003) (Inky cap fungus)).